The chain runs to 74 residues: Putative sulfur carrier protein NMA0882 (74 aa).

The active-site Cysteine persulfide intermediate is the cysteine 13.

The protein belongs to the sulfur carrier protein TusA family.

The chain is Putative sulfur carrier protein NMA0882 from Neisseria meningitidis serogroup A / serotype 4A (strain DSM 15465 / Z2491).